A 351-amino-acid chain; its full sequence is Magnesium-protoporphyrin IX monomethyl ester [oxidative] cyclase 1 (351 aa).

The protein belongs to the AcsF family. Fe cation is required as a cofactor.

The enzyme catalyses Mg-protoporphyrin IX 13-monomethyl ester + 3 NADPH + 3 O2 + 2 H(+) = 3,8-divinyl protochlorophyllide a + 3 NADP(+) + 5 H2O. The protein operates within porphyrin-containing compound metabolism; chlorophyll biosynthesis (light-independent). Functionally, catalyzes the formation of the isocyclic ring in chlorophyll biosynthesis. Mediates the cyclase reaction, which results in the formation of divinylprotochlorophyllide (Pchlide) characteristic of all chlorophylls from magnesium-protoporphyrin IX 13-monomethyl ester (MgPMME). This chain is Magnesium-protoporphyrin IX monomethyl ester [oxidative] cyclase 1, found in Nostoc sp. (strain PCC 7120 / SAG 25.82 / UTEX 2576).